The following is a 388-amino-acid chain: Phosphopentomutase (388 aa).

Aspartate 11, aspartate 283, histidine 288, aspartate 324, histidine 325, and histidine 336 together coordinate Mn(2+).

It belongs to the phosphopentomutase family. Mn(2+) is required as a cofactor.

Its subcellular location is the cytoplasm. It catalyses the reaction 2-deoxy-alpha-D-ribose 1-phosphate = 2-deoxy-D-ribose 5-phosphate. The enzyme catalyses alpha-D-ribose 1-phosphate = D-ribose 5-phosphate. The protein operates within carbohydrate degradation; 2-deoxy-D-ribose 1-phosphate degradation; D-glyceraldehyde 3-phosphate and acetaldehyde from 2-deoxy-alpha-D-ribose 1-phosphate: step 1/2. Its function is as follows. Isomerase that catalyzes the conversion of deoxy-ribose 1-phosphate (dRib-1-P) and ribose 1-phosphate (Rib-1-P) to deoxy-ribose 5-phosphate (dRib-5-P) and ribose 5-phosphate (Rib-5-P), respectively. The protein is Phosphopentomutase of Anaeromyxobacter sp. (strain K).